The chain runs to 642 residues: MSEIVVTLPDGSELEMESGSTVEDVAYEIGPGLGDDTVAGVVDGELVDKAEQLTDDCELVIVTDQSDEYLQVLRHSAAHVFAQALQRLHPEAKLAIGPPTEEGFYYDVTGVDLDADDLEAIEAEMETIIEADHDIERAERSREEAFEIYEDNPYKRDILETEAADEDPVSFYTQDDWQDLCQGPHVDSTGEIGAVELLNIAAAYWRGDEDNETLTRVYGTAFESESDLEGFLQRREEAKKRDHRKLGQELDLFSIPDVTGPGLPLYHPNGKAVLRELEDFVDQLNDDQGYEFVETPHLFRTELWKQSGHYENYVDDMFLLDVNDEEYGLKPMNCPGHATIFNQGNWSYRDLPVRYAENGKVYRKEQRGELSGLSRVWAFTIDDGHLFVERDAIEQEVNVIMDQIEEVLDTFDLDYEVALATRPEKSVGSDEIWEQAQTQLRSVLESSGMDYDIESGDGAFYGPKIDFAFEDALGRNWDGPTVQLDFNMPERFDLTYTGEDNEEHRPVMIHRALYGSYERFFMVLIEHFDGNFPTWLAPEQVRILPVSDDNIGYAKQLKNRYLDDFRVEIEDRSWTVGKKIQTAHDDRVPYMLVVGDNEEEAGTVSVRDRFEDERKDVDVETFRDHLASEVEEKRVEPDFVDE.

The region spanning 1–63 (MSEIVVTLPD…TDDCELVIVT (63 aa)) is the TGS domain. The tract at residues 242 to 533 (DHRKLGQELD…LIEHFDGNFP (292 aa)) is catalytic. 3 residues coordinate Zn(2+): cysteine 334, histidine 385, and histidine 510.

This sequence belongs to the class-II aminoacyl-tRNA synthetase family. As to quaternary structure, homodimer. Requires Zn(2+) as cofactor.

The protein resides in the cytoplasm. The enzyme catalyses tRNA(Thr) + L-threonine + ATP = L-threonyl-tRNA(Thr) + AMP + diphosphate + H(+). In terms of biological role, catalyzes the attachment of threonine to tRNA(Thr) in a two-step reaction: L-threonine is first activated by ATP to form Thr-AMP and then transferred to the acceptor end of tRNA(Thr). In Natronomonas pharaonis (strain ATCC 35678 / DSM 2160 / CIP 103997 / JCM 8858 / NBRC 14720 / NCIMB 2260 / Gabara) (Halobacterium pharaonis), this protein is Threonine--tRNA ligase.